Reading from the N-terminus, the 123-residue chain is MPQASPTSAGHAAENQALEFLQGQGLRLLTRNWRCKGGELDLVMLDTDTVVFVEVRYRLHAGFGGALGSIDGRKQKRLVHAASLFLLKESCWANHPCRFDVVALQGSHHAGRPLQWLKNAFEC.

It belongs to the UPF0102 family.

The chain is UPF0102 protein PputW619_0932 from Pseudomonas putida (strain W619).